The following is a 172-amino-acid chain: Ribosome maturation factor RimM (172 aa).

The 73-residue stretch at D96 to L168 folds into the PRC barrel domain.

It belongs to the RimM family. As to quaternary structure, binds ribosomal protein uS19.

The protein resides in the cytoplasm. Functionally, an accessory protein needed during the final step in the assembly of 30S ribosomal subunit, possibly for assembly of the head region. Essential for efficient processing of 16S rRNA. May be needed both before and after RbfA during the maturation of 16S rRNA. It has affinity for free ribosomal 30S subunits but not for 70S ribosomes. The chain is Ribosome maturation factor RimM from Streptococcus thermophilus (strain ATCC BAA-491 / LMD-9).